The primary structure comprises 274 residues: MASKSQFPYEDRARDHPNPLARRLFQIATEKQSNVVVSADVTTTKELLDLADRLGPYMVVLKTHIDILADFSAETITGLQSLSQKHNFLIFEDRKFVDIGNTVQKQYHGGALHISEWAHIVNATVLPGPGIIDALAQVASAPDFPHASDRGLLILATMTSKGSLATGQYTELSVELARKYKGFVLGFVASRSLEGVETAGKADDEDFVLFTTGVNLASKGDALGQQYQTPESAIGGGADFIISGRGIYAAPDPVDAARRYQKAGWDAYLKRVGR.

Residues Asp-40, 62 to 64, 93 to 102, Tyr-227, and Arg-245 each bind substrate; these read KTH and DRKFVDIGNT. The active-site Proton donor is Lys-95.

Belongs to the OMP decarboxylase family.

The enzyme catalyses orotidine 5'-phosphate + H(+) = UMP + CO2. The protein operates within pyrimidine metabolism; UMP biosynthesis via de novo pathway; UMP from orotate: step 2/2. The polypeptide is Orotidine 5'-phosphate decarboxylase (URA3) (Coccidioides posadasii (strain RMSCC 757 / Silveira) (Valley fever fungus)).